The following is a 214-amino-acid chain: Protein DMP6 (214 aa).

The next 4 membrane-spanning stretches (helical) occupy residues 52-72, 83-103, 143-163, and 178-198; these read LANL…PICT, FMTA…SFTD, FIDF…VLFD, and VVEL…MVFA.

This sequence belongs to the plant DMP1 protein family. In terms of tissue distribution, expressed constitutively in leaves, stems, flowers, siliques and roots (e.g. root hairs).

It localises to the vacuole membrane. Involved in membrane remodeling. The polypeptide is Protein DMP6 (Arabidopsis thaliana (Mouse-ear cress)).